The following is a 292-amino-acid chain: Protoheme IX farnesyltransferase (292 aa).

9 consecutive transmembrane segments (helical) span residues 11–31, 37–57, 85–105, 108–128, 133–153, 163–183, 199–219, 223–243, and 261–281; these read FGIV…GFQI, WKIF…SLAL, AAAG…LFKL, VAGW…TLWW, VFAA…GYAV, SLYL…VLAI, VALG…VYVG, AAPM…PFVF, and WLAF…IPVI.

This sequence belongs to the UbiA prenyltransferase family. Protoheme IX farnesyltransferase subfamily.

It is found in the cell inner membrane. It carries out the reaction heme b + (2E,6E)-farnesyl diphosphate + H2O = Fe(II)-heme o + diphosphate. The protein operates within porphyrin-containing compound metabolism; heme O biosynthesis; heme O from protoheme: step 1/1. Its function is as follows. Converts heme B (protoheme IX) to heme O by substitution of the vinyl group on carbon 2 of heme B porphyrin ring with a hydroxyethyl farnesyl side group. This Bdellovibrio bacteriovorus (strain ATCC 15356 / DSM 50701 / NCIMB 9529 / HD100) protein is Protoheme IX farnesyltransferase.